A 232-amino-acid chain; its full sequence is 5'-methylthioadenosine/S-adenosylhomocysteine nucleosidase (232 aa).

The active-site Proton acceptor is Glu12. Substrate is bound by residues Gly78, Ile152, and 173 to 174 (ME). Asp197 functions as the Proton donor in the catalytic mechanism.

This sequence belongs to the PNP/UDP phosphorylase family. MtnN subfamily. As to quaternary structure, homodimer.

It carries out the reaction S-adenosyl-L-homocysteine + H2O = S-(5-deoxy-D-ribos-5-yl)-L-homocysteine + adenine. The catalysed reaction is S-methyl-5'-thioadenosine + H2O = 5-(methylsulfanyl)-D-ribose + adenine. The enzyme catalyses 5'-deoxyadenosine + H2O = 5-deoxy-D-ribose + adenine. It participates in amino-acid biosynthesis; L-methionine biosynthesis via salvage pathway; S-methyl-5-thio-alpha-D-ribose 1-phosphate from S-methyl-5'-thioadenosine (hydrolase route): step 1/2. In terms of biological role, catalyzes the irreversible cleavage of the glycosidic bond in both 5'-methylthioadenosine (MTA) and S-adenosylhomocysteine (SAH/AdoHcy) to adenine and the corresponding thioribose, 5'-methylthioribose and S-ribosylhomocysteine, respectively. Also cleaves 5'-deoxyadenosine, a toxic by-product of radical S-adenosylmethionine (SAM) enzymes, into 5-deoxyribose and adenine. Thus, is required for in vivo function of the radical SAM enzymes biotin synthase and lipoic acid synthase, that are inhibited by 5'-deoxyadenosine accumulation. The chain is 5'-methylthioadenosine/S-adenosylhomocysteine nucleosidase from Erwinia tasmaniensis (strain DSM 17950 / CFBP 7177 / CIP 109463 / NCPPB 4357 / Et1/99).